Here is a 926-residue protein sequence, read N- to C-terminus: Beta-mannosidase A (926 aa).

Positions 1 to 21 (MHVKAETVLALLTPAPPSVVG) are cleaved as a signal peptide. 5 N-linked (GlcNAc...) asparagine glycosylation sites follow: Asn-40, Asn-242, Asn-277, Asn-311, and Asn-342. Glu-474 serves as the catalytic Proton donor. N-linked (GlcNAc...) asparagine glycosylation is found at Asn-532, Asn-603, Asn-626, Asn-653, Asn-733, Asn-756, Asn-785, Asn-793, Asn-819, and Asn-905.

The protein belongs to the glycosyl hydrolase 2 family. Beta-mannosidase A subfamily. Homodimer.

It localises to the secreted. The enzyme catalyses Hydrolysis of terminal, non-reducing beta-D-mannose residues in beta-D-mannosides.. Its pathway is glycan metabolism; N-glycan degradation. In terms of biological role, exoglycosidase that cleaves the single beta-linked mannose residue from the non-reducing end of beta-mannosidic oligosaccharides of various complexity and length. Involved in the degradation of polymeric mannan and galactomannan. In Aspergillus fumigatus (strain CBS 144.89 / FGSC A1163 / CEA10) (Neosartorya fumigata), this protein is Beta-mannosidase A (mndA).